Here is a 67-residue protein sequence, read N- to C-terminus: Large ribosomal subunit protein bL35 (67 aa).

It belongs to the bacterial ribosomal protein bL35 family.

The chain is Large ribosomal subunit protein bL35 from Bartonella henselae (strain ATCC 49882 / DSM 28221 / CCUG 30454 / Houston 1) (Rochalimaea henselae).